We begin with the raw amino-acid sequence, 369 residues long: 1-aminocyclopropane-1-carboxylate oxidase homolog 3 (369 aa).

In terms of domain architecture, Fe2OG dioxygenase spans 217–318 (KGLLMLSHYY…VSVACFFTTG (102 aa)). Fe cation contacts are provided by H241, D243, and H297.

Belongs to the iron/ascorbate-dependent oxidoreductase family. Requires Fe cation as cofactor.

The sequence is that of 1-aminocyclopropane-1-carboxylate oxidase homolog 3 from Arabidopsis thaliana (Mouse-ear cress).